The primary structure comprises 395 residues: Phosphoglycerate kinase (395 aa).

Substrate-binding positions include 21–23 (DIN), R36, 59–62 (HFGR), R114, and R147. ATP contacts are provided by residues K197, E322, and 352–355 (GGDT).

The protein belongs to the phosphoglycerate kinase family. Monomer.

It localises to the cytoplasm. The catalysed reaction is (2R)-3-phosphoglycerate + ATP = (2R)-3-phospho-glyceroyl phosphate + ADP. It functions in the pathway carbohydrate degradation; glycolysis; pyruvate from D-glyceraldehyde 3-phosphate: step 2/5. This chain is Phosphoglycerate kinase, found in Roseobacter denitrificans (strain ATCC 33942 / OCh 114) (Erythrobacter sp. (strain OCh 114)).